Reading from the N-terminus, the 159-residue chain is Ribosome maturation factor RimP (159 aa).

It belongs to the RimP family.

It localises to the cytoplasm. Required for maturation of 30S ribosomal subunits. This is Ribosome maturation factor RimP from Streptococcus agalactiae serotype III (strain NEM316).